The chain runs to 104 residues: Large ribosomal subunit protein eL42 (104 aa).

Positions Lys-22–Leu-56 are disordered.

Belongs to the eukaryotic ribosomal protein eL42 family.

This chain is Large ribosomal subunit protein eL42 (RPL44), found in Encephalitozoon cuniculi (strain GB-M1) (Microsporidian parasite).